Reading from the N-terminus, the 349-residue chain is Protein-glutamate methylesterase/protein-glutamine glutaminase (349 aa).

Positions 5-122 (RVLSVDDSAL…REGMLAYSEM (118 aa)) constitute a Response regulatory domain. Aspartate 56 is modified (4-aspartylphosphate). Positions 152-344 (LLSSEKLIAI…QQMLAKISAG (193 aa)) constitute a CheB-type methylesterase domain. Active-site residues include serine 164, histidine 190, and aspartate 286.

This sequence belongs to the CheB family. Phosphorylated by CheA. Phosphorylation of the N-terminal regulatory domain activates the methylesterase activity.

It localises to the cytoplasm. It carries out the reaction [protein]-L-glutamate 5-O-methyl ester + H2O = L-glutamyl-[protein] + methanol + H(+). The catalysed reaction is L-glutaminyl-[protein] + H2O = L-glutamyl-[protein] + NH4(+). Its function is as follows. Involved in chemotaxis. Part of a chemotaxis signal transduction system that modulates chemotaxis in response to various stimuli. Catalyzes the demethylation of specific methylglutamate residues introduced into the chemoreceptors (methyl-accepting chemotaxis proteins or MCP) by CheR. Also mediates the irreversible deamidation of specific glutamine residues to glutamic acid. The chain is Protein-glutamate methylesterase/protein-glutamine glutaminase from Escherichia coli O6:H1 (strain CFT073 / ATCC 700928 / UPEC).